We begin with the raw amino-acid sequence, 307 residues long: MQETTISILGAGAWGASLANLAIANGNRVRVWSRRGSETLSAVLQGADIVLSAISMKGVREVASQIQSLTPSPETIFVTATKGLEPETIYTPSQIWQSCFPHHPVVVLSGPNLSKEIDQSLPAATVVASRVATAAATVQLAFSSSRFRVYTNPDPVGVELGGTLKNVIAIASGVCDGLHLGTNAKAALVTRGLTEMVRIGNCWGAKTETFYGLSGLGDLLATCNSPLSRNYQVGYQLAGGETLAQILAKLPGTAEGVNTCQVLVQLARQQNIVIPITEQVYRLLQGEVTPQQALDELMLRDIKPEYN.

Positions 14, 34, 35, and 82 each coordinate NADPH. The sn-glycerol 3-phosphate site is built by Lys82 and Gly110. Ser114 contributes to the NADPH binding site. Sn-glycerol 3-phosphate contacts are provided by Lys165, Asp218, Ser228, Arg229, and Asn230. Lys165 functions as the Proton acceptor in the catalytic mechanism. Position 229 (Arg229) interacts with NADPH. Glu255 contributes to the NADPH binding site.

The protein belongs to the NAD-dependent glycerol-3-phosphate dehydrogenase family.

It localises to the cytoplasm. It catalyses the reaction sn-glycerol 3-phosphate + NAD(+) = dihydroxyacetone phosphate + NADH + H(+). The enzyme catalyses sn-glycerol 3-phosphate + NADP(+) = dihydroxyacetone phosphate + NADPH + H(+). The protein operates within membrane lipid metabolism; glycerophospholipid metabolism. Its function is as follows. Catalyzes the reduction of the glycolytic intermediate dihydroxyacetone phosphate (DHAP) to sn-glycerol 3-phosphate (G3P), the key precursor for phospholipid synthesis. This Nostoc sp. (strain PCC 7120 / SAG 25.82 / UTEX 2576) protein is Glycerol-3-phosphate dehydrogenase [NAD(P)+].